Consider the following 219-residue polypeptide: Antigen 5 like allergen Cul n 1 (219 aa).

The N-terminal stretch at 1 to 19 is a signal peptide; sequence MIKKLSIVILFSCISFVLS. 3 cysteine pairs are disulfide-bonded: cysteine 23–cysteine 45, cysteine 28–cysteine 124, and cysteine 55–cysteine 117. The SCP domain occupies 73–211; it reads LKVHNRLRNK…RHSGNKYFFW (139 aa).

The protein belongs to the CRISP family. As to expression, expressed in salivary glands.

The protein localises to the secreted. The sequence is that of Antigen 5 like allergen Cul n 1 from Culicoides nubeculosus (Biting midge).